Reading from the N-terminus, the 544-residue chain is Chaperonin GroEL 2 (544 aa).

ATP contacts are provided by residues 29–32, 86–90, Gly-413, 479–481, and Asp-495; these read TLGP, DGTTT, and NAA.

Belongs to the chaperonin (HSP60) family. As to quaternary structure, forms a cylinder of 14 subunits composed of two heptameric rings stacked back-to-back. Interacts with the co-chaperonin GroES.

The protein localises to the cytoplasm. It carries out the reaction ATP + H2O + a folded polypeptide = ADP + phosphate + an unfolded polypeptide.. Together with its co-chaperonin GroES, plays an essential role in assisting protein folding. The GroEL-GroES system forms a nano-cage that allows encapsulation of the non-native substrate proteins and provides a physical environment optimized to promote and accelerate protein folding. This is Chaperonin GroEL 2 from Prochlorococcus marinus subsp. pastoris (strain CCMP1986 / NIES-2087 / MED4).